Here is a 280-residue protein sequence, read N- to C-terminus: Formyltetrahydrofolate deformylase (280 aa).

One can recognise an ACT domain in the interval 8–86 (VLRTICPDQK…RELNPAGRRR (79 aa)). D225 is a catalytic residue.

It belongs to the PurU family. As to quaternary structure, homohexamer.

It carries out the reaction (6R)-10-formyltetrahydrofolate + H2O = (6S)-5,6,7,8-tetrahydrofolate + formate + H(+). It participates in purine metabolism; IMP biosynthesis via de novo pathway; formate from 10-formyl-5,6,7,8-tetrahydrofolate: step 1/1. With respect to regulation, activated by methionine, inhibited by glycine. Its function is as follows. Catalyzes the hydrolysis of 10-formyltetrahydrofolate (formyl-FH4) to formate and tetrahydrofolate (FH4). Provides the major source of formate for the PurT-dependent synthesis of 5'-phosphoribosyl-N-formylglycinamide (FGAR) during aerobic growth. Has a role in regulating the one-carbon pool. This is Formyltetrahydrofolate deformylase from Escherichia coli (strain K12).